Consider the following 445-residue polypeptide: MAQSHSSSVNYFGSVNKVVFEGKASTNPLAFKYYNPQEVIGGKTMKEHLRFSIAYWHTFTADGTDVFGAATMQRPWDHYKGMDLARARVEAAFEMFEKLDAPFFAFHDRDIAPEGSTLKETNQNLDIIVGMIKDYMRDSNVKLLWNTANMFTNPRFVHGAATSCNADVFAYAAAQVKKGLETAKELGAENYVFWGGREGYETLLNTDLKFELDNLARFMHMAVDYAKEIEYTGQFLIEPKPKEPTTHQYDTDAATTIAFLKQYGLDNHFKLNLEANHATLAGHTFEHELRMARVHGLLGSVDANQGHPLLGWDTDEFPTDLYSTTLAMYEILQNGGLGSGGLNFDAKVRRSSFEPDDLVYAHIAGMDAFARGLKVAHKLIEDRVFEDVIQHRYRSFTEGIGLEITEGRANFHTLEQYALNNKTIKNESGRQERLKAILNQYILEV.

Catalysis depends on residues His107 and Asp110. 7 residues coordinate Mg(2+): Glu238, Glu274, His277, Asp302, Asp313, Asp315, and Asp345.

It belongs to the xylose isomerase family. As to quaternary structure, homotetramer. It depends on Mg(2+) as a cofactor.

Its subcellular location is the cytoplasm. It carries out the reaction alpha-D-xylose = alpha-D-xylulofuranose. The protein is Xylose isomerase (xylA) of Bacillus spizizenii (strain ATCC 23059 / NRRL B-14472 / W23) (Bacillus subtilis subsp. spizizenii).